The chain runs to 686 residues: Envelope glycoprotein H (686 aa).

Residues 1–24 (MPASSVRLPLRLLTLAGLLALAGA) form the signal peptide. Residues 25–646 (AALARGAPQG…TSTRLAPVSP (622 aa)) are Virion surface-facing. Residues Asn-77, Asn-162, Asn-542, Asn-604, and Asn-627 are each glycosylated (N-linked (GlcNAc...) asparagine; by host). Residues 157–217 (PAAVFNVTLG…PPAGRFHVYT (61 aa)) form an interaction with gL region. A helical membrane pass occupies residues 647-667 (AYVVASVVGAAITVGILYALF). Topologically, residues 668 to 686 (KMLCSFSSEGYSRLINARS) are intravirion.

Belongs to the herpesviridae glycoprotein H family. As to quaternary structure, interacts with glycoprotein L (gL); this interaction is necessary for the correct processing and cell surface expression of gH. The heterodimer gH/gL seems to interact with gB trimers during fusion. In terms of processing, N-glycosylated, O-glycosylated, and sialylated.

It is found in the virion membrane. Its subcellular location is the host cell membrane. The protein localises to the host endosome membrane. The heterodimer glycoprotein H-glycoprotein L is required for the fusion of viral and plasma membranes leading to virus entry into the host cell. Following initial binding to host receptor, membrane fusion is mediated by the fusion machinery composed of gB and the heterodimer gH/gL. May also be involved in the fusion between the virion envelope and the outer nuclear membrane during virion morphogenesis. This chain is Envelope glycoprotein H, found in Sus scrofa (Pig).